The following is a 148-amino-acid chain: SsrA-binding protein (148 aa).

The tract at residues 119 to 148 (AKGKKQHDKRQSMKEADWKREKQRLIKHTR) is disordered. Residues 127 to 142 (KRQSMKEADWKREKQR) are compositionally biased toward basic and acidic residues.

This sequence belongs to the SmpB family.

It is found in the cytoplasm. Its function is as follows. Required for rescue of stalled ribosomes mediated by trans-translation. Binds to transfer-messenger RNA (tmRNA), required for stable association of tmRNA with ribosomes. tmRNA and SmpB together mimic tRNA shape, replacing the anticodon stem-loop with SmpB. tmRNA is encoded by the ssrA gene; the 2 termini fold to resemble tRNA(Ala) and it encodes a 'tag peptide', a short internal open reading frame. During trans-translation Ala-aminoacylated tmRNA acts like a tRNA, entering the A-site of stalled ribosomes, displacing the stalled mRNA. The ribosome then switches to translate the ORF on the tmRNA; the nascent peptide is terminated with the 'tag peptide' encoded by the tmRNA and targeted for degradation. The ribosome is freed to recommence translation, which seems to be the essential function of trans-translation. The polypeptide is SsrA-binding protein (Neisseria gonorrhoeae (strain ATCC 700825 / FA 1090)).